The chain runs to 266 residues: Glutamate racemase (266 aa).

Substrate is bound by residues 9–10 (DS) and 41–42 (YG). Cysteine 73 acts as the Proton donor/acceptor in catalysis. A substrate-binding site is contributed by 74–75 (NT). The active-site Proton donor/acceptor is cysteine 183. Substrate is bound at residue 184–185 (TH).

This sequence belongs to the aspartate/glutamate racemases family.

It carries out the reaction L-glutamate = D-glutamate. The protein operates within cell wall biogenesis; peptidoglycan biosynthesis. Its function is as follows. Provides the (R)-glutamate required for cell wall biosynthesis. In Shewanella woodyi (strain ATCC 51908 / MS32), this protein is Glutamate racemase.